Here is a 234-residue protein sequence, read N- to C-terminus: Phosphoribosylformylglycinamidine synthase subunit PurQ (234 aa).

The 229-residue stretch at 6 to 234 folds into the Glutamine amidotransferase type-1 domain; the sequence is VGVVVFPGSN…ESLFRSLTGV (229 aa). Cys-89 (nucleophile) is an active-site residue. Residues His-206 and Glu-208 contribute to the active site.

As to quaternary structure, part of the FGAM synthase complex composed of 1 PurL, 1 PurQ and 2 PurS subunits.

It localises to the cytoplasm. The enzyme catalyses N(2)-formyl-N(1)-(5-phospho-beta-D-ribosyl)glycinamide + L-glutamine + ATP + H2O = 2-formamido-N(1)-(5-O-phospho-beta-D-ribosyl)acetamidine + L-glutamate + ADP + phosphate + H(+). It catalyses the reaction L-glutamine + H2O = L-glutamate + NH4(+). It functions in the pathway purine metabolism; IMP biosynthesis via de novo pathway; 5-amino-1-(5-phospho-D-ribosyl)imidazole from N(2)-formyl-N(1)-(5-phospho-D-ribosyl)glycinamide: step 1/2. Functionally, part of the phosphoribosylformylglycinamidine synthase complex involved in the purines biosynthetic pathway. Catalyzes the ATP-dependent conversion of formylglycinamide ribonucleotide (FGAR) and glutamine to yield formylglycinamidine ribonucleotide (FGAM) and glutamate. The FGAM synthase complex is composed of three subunits. PurQ produces an ammonia molecule by converting glutamine to glutamate. PurL transfers the ammonia molecule to FGAR to form FGAM in an ATP-dependent manner. PurS interacts with PurQ and PurL and is thought to assist in the transfer of the ammonia molecule from PurQ to PurL. In Chlorobium chlorochromatii (strain CaD3), this protein is Phosphoribosylformylglycinamidine synthase subunit PurQ.